Reading from the N-terminus, the 471-residue chain is 4-aminobutyrate aminotransferase (471 aa).

A pyridoxal 5'-phosphate-binding site is contributed by 135 to 136 (GA). Substrate is bound at residue Arg192. N6-(pyridoxal phosphate)lysine is present on Lys326. Residue Thr351 coordinates pyridoxal 5'-phosphate.

It belongs to the class-III pyridoxal-phosphate-dependent aminotransferase family. Homodimer and homotetramer. The cofactor is pyridoxal 5'-phosphate.

It localises to the cytoplasm. The enzyme catalyses 4-aminobutanoate + 2-oxoglutarate = succinate semialdehyde + L-glutamate. In terms of biological role, required for the degradation of gamma-aminobutyric acid (GABA), which is important for utilization of GABA as nitrogen source and for oxidative stress tolerance. Deaminates GABA to succinate semialdehyde, which in turn is converted to succinate by the succinate-semialdehyde dehydrogenase UGA2. Cannot transaminate beta-alanine (BAL). This is 4-aminobutyrate aminotransferase (UGA1) from Saccharomyces cerevisiae (strain ATCC 204508 / S288c) (Baker's yeast).